A 232-amino-acid polypeptide reads, in one-letter code: 5'-methylthioadenosine/S-adenosylhomocysteine nucleosidase (232 aa).

Glutamate 12 serves as the catalytic Proton acceptor. Substrate contacts are provided by residues glycine 78, isoleucine 152, and 173 to 174; that span reads ME. Aspartate 197 functions as the Proton donor in the catalytic mechanism.

Belongs to the PNP/UDP phosphorylase family. MtnN subfamily. Homodimer.

It carries out the reaction S-adenosyl-L-homocysteine + H2O = S-(5-deoxy-D-ribos-5-yl)-L-homocysteine + adenine. It catalyses the reaction S-methyl-5'-thioadenosine + H2O = 5-(methylsulfanyl)-D-ribose + adenine. The enzyme catalyses 5'-deoxyadenosine + H2O = 5-deoxy-D-ribose + adenine. Its pathway is amino-acid biosynthesis; L-methionine biosynthesis via salvage pathway; S-methyl-5-thio-alpha-D-ribose 1-phosphate from S-methyl-5'-thioadenosine (hydrolase route): step 1/2. Functionally, catalyzes the irreversible cleavage of the glycosidic bond in both 5'-methylthioadenosine (MTA) and S-adenosylhomocysteine (SAH/AdoHcy) to adenine and the corresponding thioribose, 5'-methylthioribose and S-ribosylhomocysteine, respectively. Also cleaves 5'-deoxyadenosine, a toxic by-product of radical S-adenosylmethionine (SAM) enzymes, into 5-deoxyribose and adenine. Thus, is required for in vivo function of the radical SAM enzymes biotin synthase and lipoic acid synthase, that are inhibited by 5'-deoxyadenosine accumulation. The sequence is that of 5'-methylthioadenosine/S-adenosylhomocysteine nucleosidase from Klebsiella pneumoniae subsp. pneumoniae (strain ATCC 700721 / MGH 78578).